Reading from the N-terminus, the 171-residue chain is Translation initiation factor IF-3 (171 aa).

It belongs to the IF-3 family. In terms of assembly, monomer.

It localises to the cytoplasm. IF-3 binds to the 30S ribosomal subunit and shifts the equilibrium between 70S ribosomes and their 50S and 30S subunits in favor of the free subunits, thus enhancing the availability of 30S subunits on which protein synthesis initiation begins. The chain is Translation initiation factor IF-3 from Halalkalibacterium halodurans (strain ATCC BAA-125 / DSM 18197 / FERM 7344 / JCM 9153 / C-125) (Bacillus halodurans).